The following is a 362-amino-acid chain: MTVTNKPVEPANVPVMDFEAIHASVGNERKEYLRQLDEAWSHHGAVYVINHSIGTETLEEAFVWCKKFFDLPLAVKNSVHIPPDVSKHFQGWTGTGEAISSQGVWDPDEIERLRKEMPTELKEAMELQDPCGTYPPGNPDLNLVEQHLPGYLDFLKKWFAACYKQSLQNMRLVCEILGMEDLDYIGKKFEPRHMSTHSTWNYFLGQPVSQLASGSSNRLNAHTDYCQFTMLFQDMVGGLELHDYEEDIYRPVPPIKGAMIVQVGDLLEKQTNGRWRSALHRVTAPSRYMYGGSPGGDDELVQRYSLVFFGHLNLDEMIKPLPGCEKPGKWSTLEWKDLMTAGQWLARRVALEYERKTAATVM.

The Fe2OG dioxygenase domain occupies threonine 199–leucine 312. Fe cation is bound by residues histidine 222, aspartate 224, and histidine 280. Arginine 303 provides a ligand contact to 2-oxoglutarate.

Belongs to the iron/ascorbate-dependent oxidoreductase family. Requires Fe(2+) as cofactor.

It functions in the pathway alkaloid biosynthesis. Functionally, 2-oxoglutarate-dependent dioxygenase; part of the gene cluster that mediates the biosynthesis of loline alkaloids, potent insecticidal agents composed of a pyrrolizidine ring system and an uncommon ether bridge linking carbons 2 and 7. Lolines are structurally differentiated by the various modifications of the L-amino group and include norloline, loline, N-methylloline, N-acetylloline, N-acetylnorloline, and N-formylloline. The first committed step is the condensation of O-acetyl-L-homoserine (derived from L-aspartic acid) and L-proline, probably catalyzed by the gamma-type pyridoxal 5'-phosphate(PLP)-dependent enzyme lolC, to give the diamino diacid, NACPP. Ensuing cyclization, decarboxylation, and acetylation steps yield 1-exo-acetamidopyrrolizidine (AcAP). LolO is required for installation of the ether bridge upon the pathway intermediate, 1-exo-acetamidopyrrolizidine (AcAP). In sequential 2-oxoglutarate- and O(2)-consuming steps, lolO removes hydrogens from C2 and C7 of AcAP to form both carbon-oxygen bonds in N-acetylnorloline (NANL), the precursor to all other lolines. The enzymes lolD, lolE, lolF and lolT have also been proposed to be involved in the ether-bridge installation. Further processing of the exocyclic moiety of NANL by fungal N-acetamidase (LolN), methyltransferase (LolM), and cytochrome P450 (LolP) enzymes, with occasional involvement of a plant acetyltransferase, generates the other known lolines. LolN transforms NANL to norlonine which is monomethylated and dimethylated to respectively lonine and N-methyllonine (NML) by lolM. LolP catalyzes hydroxylation of the methyl group in N-methylloline (NML) and further oxygenation to N-formylloline (NFL). A plant acetyltransferase is responsible for the acetylation of loline to form N-acetylloline (NAL). LolA might interact with aspartate kinase to prevent feedback inhibition of its activity by these end products and thereby promote production of L-homoserine from L-aspartate. This Epichloe uncinata (Endophyte fungus) protein is 2-oxoglutarate-dependent dioxygenase lolO2.